Reading from the N-terminus, the 622-residue chain is Neuronal acetylcholine receptor subunit alpha-4 (622 aa).

A signal peptide spans 1–23 (MGFLVSKGNLLLLLCASIFPAFG). Over 24–237 (HVETRAHAEE…ITYSFIIRRL (214 aa)) the chain is Extracellular. N52 is a glycosylation site (N-linked (GlcNAc...) asparagine). Ca(2+) contacts are provided by V71 and E73. N102 is a glycosylation site (N-linked (GlcNAc...) asparagine). Cystine bridges form between C156-C170 and C220-C221. The helical transmembrane segment at 238-262 (PLFYTINLIIPCLLISCLTVLVFYL) threads the bilayer. C266 is lipidated: S-palmitoyl cysteine. The next 2 membrane-spanning stretches (helical) occupy residues 270-288 (ITLC…LLIT) and 304-325 (YLLF…VLNV). Residues 326-595 (HHRSPRTHTM…WKYVAMVIDR (270 aa)) are Cytoplasmic-facing. Disordered regions lie at residues 380-477 (WSET…TEEG) and 497-516 (QTNG…LNEE). The span at 390 to 407 (TTSSSPSPQSNEPSPTSS) shows a compositional bias: low complexity. Composition is skewed to polar residues over residues 450–472 (SDTQ…YSPN) and 497–508 (QTNGHSSASPAS). The chain crosses the membrane as a helical span at residues 596 to 614 (IFLWMFIIVCLLGTVGLFL).

Belongs to the ligand-gated ion channel (TC 1.A.9) family. Acetylcholine receptor (TC 1.A.9.1) subfamily. Alpha-4/CHRNA4 sub-subfamily. As to quaternary structure, neuronal AChR is composed of two different types of subunits: alpha and beta. CHRNA4 forms heteropentameric neuronal acetylcholine receptors with CHRNB2 and CHRNB4, as well as CHRNA5 and CHRNB3 as accesory subunits. Found in two major stoichiometric forms, LS (low agonist sensitivity): (CHRNA4)3:(CHRNB2)2 and HS (high agonist sensitivity): (CHRNA4)2:(CHRNB2)3, the two stoichiometric forms differ in their unitary conductance, calcium permeability, ACh sensitivity and potentiation by divalent cation. Cells produce predominantly an (CHRNA4)3:(CHRNB2)2 nAChR. The (CHRNA4)2:(CHRNB2)3 expression is selectively up-regulated by nicotine and has lower single channel conductance and calcium permeability. In the striatum, also forms CHRNA4:CHRNA6:CHRNB2 complexes. Also found in the stoichiometric form: (CHRNA4:CHRNB2)2:CHRNB3.

It localises to the synaptic cell membrane. It is found in the cell membrane. The catalysed reaction is Ca(2+)(in) = Ca(2+)(out). It catalyses the reaction K(+)(in) = K(+)(out). It carries out the reaction Na(+)(in) = Na(+)(out). With respect to regulation, activated by a myriad of ligands such as acetylcholine, cytisine, nicotine, choline and epibatidine. Channel potentiation by calcium is stoichiometry-selective, CHRNA4:CHRNB2 nACh receptor is achieved by calcium association with topographically distinct sites framed by anionic residues within the CHRNA4 subunit and between the CHRNA4 and CHRNB2 subunits. nAChR activity is inhibited by the antagonist alpha-conotoxins BuIA, PnIA, GID and MII, small disulfide-constrained peptides from cone snails. Functionally, component of neuronal acetylcholine receptors (nAChRs) that function as pentameric, ligand-gated cation channels with high calcium permeability among other activities. nAChRs are excitatory neurotrasnmitter receptors formed by a collection of nAChR subunits known to mediate synaptic transmission in the nervous system and the neuromuscular junction. Each nAchR subunit confers differential attributes to channel properties, including activation, deactivation and desensitization kinetics, pH sensitivity, cation permeability, and binding to allosteric modulators. CHRNA4 forms heteropentameric neuronal acetylcholine receptors with CHRNB2 and CHRNB4, as well as CHRNA5 and CHRNB3 as accesory subunits. Is the most abundant nAChR subtype expressed in the central nervous system. Found in two major stoichiometric forms,(CHRNA4)3:(CHRNB2)2 and (CHRNA4)2:(CHRNB2)3, the two stoichiometric forms differ in their unitary conductance, calcium permeability, ACh sensitivity and potentiation by divalent cation. Involved in the modulation of calcium-dependent signaling pathways, influences the release of neurotransmitters, including dopamine, glutamate and GABA. The chain is Neuronal acetylcholine receptor subunit alpha-4 (CHRNA4) from Gallus gallus (Chicken).